Here is a 563-residue protein sequence, read N- to C-terminus: NAD(P)H-quinone oxidoreductase chain 4 (563 aa).

A run of 15 helical transmembrane segments spans residues phenylalanine 25 to isoleucine 45, tryptophan 56 to glycine 76, valine 90 to proline 110, leucine 111 to phenylalanine 131, proline 133 to valine 153, leucine 157 to tryptophan 177, phenylalanine 189 to phenylalanine 209, glycine 230 to valine 250, threonine 264 to methionine 284, phenylalanine 298 to phenylalanine 318, methionine 335 to leucine 355, glutamine 356 to aspartate 376, phenylalanine 397 to valine 417, isoleucine 438 to methionine 458, and valine 485 to methionine 505.

This sequence belongs to the complex I subunit 4 family.

It is found in the cellular thylakoid membrane. The enzyme catalyses a plastoquinone + NADH + (n+1) H(+)(in) = a plastoquinol + NAD(+) + n H(+)(out). The catalysed reaction is a plastoquinone + NADPH + (n+1) H(+)(in) = a plastoquinol + NADP(+) + n H(+)(out). In terms of biological role, NDH-1 shuttles electrons from NAD(P)H, via FMN and iron-sulfur (Fe-S) centers, to quinones in the respiratory chain. The immediate electron acceptor for the enzyme in this species is believed to be plastoquinone. Couples the redox reaction to proton translocation (for every two electrons transferred, four hydrogen ions are translocated across the cytoplasmic membrane), and thus conserves the redox energy in a proton gradient. In Prochlorococcus marinus (strain MIT 9313), this protein is NAD(P)H-quinone oxidoreductase chain 4.